Here is a 376-residue protein sequence, read N- to C-terminus: Alanine racemase (376 aa).

The active-site Proton acceptor; specific for D-alanine is the Lys40. Lys40 bears the N6-(pyridoxal phosphate)lysine mark. Arg138 is a binding site for substrate. The active-site Proton acceptor; specific for L-alanine is Tyr270. Met317 serves as a coordination point for substrate.

Belongs to the alanine racemase family. The cofactor is pyridoxal 5'-phosphate.

It carries out the reaction L-alanine = D-alanine. The protein operates within amino-acid biosynthesis; D-alanine biosynthesis; D-alanine from L-alanine: step 1/1. Functionally, catalyzes the interconversion of L-alanine and D-alanine. May also act on other amino acids. This Lactobacillus delbrueckii subsp. bulgaricus (strain ATCC 11842 / DSM 20081 / BCRC 10696 / JCM 1002 / NBRC 13953 / NCIMB 11778 / NCTC 12712 / WDCM 00102 / Lb 14) protein is Alanine racemase (alr).